The sequence spans 68 residues: Large ribosomal subunit protein bL32 (68 aa).

The interval 1–20 (MAVPQNRVTRSRRNMRRSHD) is disordered.

The protein belongs to the bacterial ribosomal protein bL32 family.

In Cereibacter sphaeroides (strain ATCC 17029 / ATH 2.4.9) (Rhodobacter sphaeroides), this protein is Large ribosomal subunit protein bL32.